Consider the following 118-residue polypeptide: Deoxynogalonate monooxygenase (118 aa).

Residues 14-100 (VTFVNRFTVH…ALSTSEHGLF (87 aa)) enclose the ABM domain.

As to quaternary structure, homodimer.

The catalysed reaction is deoxynogalonate + O2 = nogalonate + H2O + H(+). Its pathway is antibiotic biosynthesis. In terms of biological role, involved in the biosynthesis of the anthracycline (aromatic polyketide) antibiotic nogalamycin. Catalyzes the oxygenation of 12-deoxy-nogalonic acid at position 12 to yield nogalonic acid. The protein is Deoxynogalonate monooxygenase of Streptomyces nogalater.